A 508-amino-acid chain; its full sequence is General transcription factor IIF subunit 1 (508 aa).

Alanine 2 carries the post-translational modification N-acetylalanine. Threonine 156 is subject to Phosphothreonine. Positions 177–446 (MQQRRLKDQD…TPSSGDVQVT (270 aa)) are disordered. 4 positions are modified to phosphoserine: serine 217, serine 218, serine 221, and serine 224. Over residues 232–251 (SKAKKKAPVTKAGRKKKKKK) the composition is skewed to basic residues. Acidic residues-rich tracts occupy residues 255–270 (DEAFEDSDDGDFEGQE) and 303–325 (EQSESSEESEEEKPPEEDKEEEE). Threonine 331 carries the post-translational modification Phosphothreonine. Over residues 343–355 (DDSDSSEESDIDS) the composition is skewed to acidic residues. Basic residues predominate over residues 364 to 374 (AKKKTPPKRER). Phosphoserine is present on residues serine 377, serine 380, serine 381, and serine 385. Residues 378-388 (GGSSKGTSRPG) are compositionally biased toward polar residues. Residue threonine 389 is modified to Phosphothreonine. Positions 389–406 (TPSAEAASTSSTLRAAAS) are enriched in low complexity. A Phosphoserine modification is found at serine 391. The residue at position 407 (lysine 407) is an N6-acetyllysine. Residues 428 to 443 (GPQSLSGKSTPSSGDV) show a composition bias toward polar residues. Serine 431, serine 433, and serine 436 each carry phosphoserine. Phosphothreonine is present on threonine 437. Position 440 is a phosphoserine (serine 440).

The protein belongs to the TFIIF alpha subunit family. Heterodimer of an alpha and a beta subunit. Interacts with GTF2F2, CTDP1, TAF6/TAFII80 and URI1. Interacts with GTF2B (via C-terminus and preferentially via acetylated form); this interaction prevents binding of GTF2B to GTF2F2. Part of TBP-based Pol II pre-initiation complex (PIC), in which Pol II core assembles with general transcription factors and other specific initiation factors including GTF2E1, GTF2E2, GTF2F1, GTF2F2, TCEA1, ERCC2, ERCC3, GTF2H2, GTF2H3, GTF2H4, GTF2H5, GTF2A1, GTF2A2, GTF2B and TBP; this large multi-subunit PIC complex mediates DNA unwinding and targets Pol II core to the transcription start site where the first phosphodiester bond forms. Phosphorylated on Ser and other residues by TAF1 and casein kinase II-like kinases.

Its subcellular location is the nucleus. Functionally, TFIIF is a general transcription initiation factor that binds to RNA polymerase II and helps to recruit it to the initiation complex in collaboration with TFIIB. It promotes transcription elongation. The chain is General transcription factor IIF subunit 1 (Gtf2f1) from Mus musculus (Mouse).